Here is a 202-residue protein sequence, read N- to C-terminus: Glycolipid transfer protein 1 (202 aa).

Positions 52, 56, 99, and 138 each coordinate a ganglioside GM3 (d18:1(4E)).

It belongs to the GLTP family.

Functionally, may be involved in glycolipids transfer. The chain is Glycolipid transfer protein 1 from Arabidopsis thaliana (Mouse-ear cress).